The chain runs to 540 residues: Patellin-4 (540 aa).

The residue at position 53 (Ser-53) is a Phosphoserine. Residues 61–183 (FADLKESEKK…EKKTEDVVTE (123 aa)) adopt a coiled-coil conformation. A disordered region spans residues 89–140 (LKTKKKESSPMKEKKEEVVKPEAEVEKKKEEAAEEKVEEEKKSEAVVTEEAP). The span at 94–140 (KESSPMKEKKEEVVKPEAEVEKKKEEAAEEKVEEEKKSEAVVTEEAP) shows a compositional bias: basic and acidic residues. Lys-249 participates in a covalent cross-link: Glycyl lysine isopeptide (Lys-Gly) (interchain with G-Cter in ubiquitin). Positions 258–428 (GEEFGEDLAT…QYGGFKTVDD (171 aa)) constitute a CRAL-TRIO domain. The region spanning 433 to 534 (NETVSEVVVK…KKKVLYRYRT (102 aa)) is the GOLD domain.

The protein belongs to the patellin family.

It localises to the membrane. The protein resides in the cytoplasm. Its function is as follows. Carrier protein that may be involved in membrane-trafficking events associated with cell plate formation during cytokinesis. Binds to some hydrophobic molecules such as phosphoinositides and promotes their transfer between the different cellular sites. This Arabidopsis thaliana (Mouse-ear cress) protein is Patellin-4 (PATL4).